Consider the following 230-residue polypeptide: Protein UPS2, mitochondrial (230 aa).

One can recognise a PRELI/MSF1 domain in the interval 1 to 175 (MKLFQNSYDF…VLQVFSENWE (175 aa)).

The protein belongs to the slowmo family. Interacts with MDM35.

Its subcellular location is the mitochondrion inner membrane. It is found in the mitochondrion intermembrane space. In terms of biological role, required for mitochondrial cristae morphogenesis and MGM1-processing. Controls the stability of mitochondrial phosphatidylethanolamine (PE). With UPS1, controls the level of cardiolipin in mitochondria. Cardiolipin is a unique phospholipid with four fatty acid chains and is present mainly in the mitochondrial inner membrane where it stabilizes the electron transport chain supercomplex between complexes III and IV through direct interaction of their subunits. The sequence is that of Protein UPS2, mitochondrial (UPS2) from Saccharomyces cerevisiae (strain ATCC 204508 / S288c) (Baker's yeast).